The sequence spans 100 residues: NADH-quinone oxidoreductase subunit K (100 aa).

Transmembrane regions (helical) follow at residues 4-24, 28-48, and 61-81; these read FEYYVALSGLLMVLGFIGVII, IIAMLLSTELMLNAVNIAFVA, and FVFFILTIAAAEAAIGLGLII.

It belongs to the complex I subunit 4L family. In terms of assembly, NDH-1 is composed of 14 different subunits. Subunits NuoA, H, J, K, L, M, N constitute the membrane sector of the complex.

The protein localises to the cell inner membrane. It catalyses the reaction a quinone + NADH + 5 H(+)(in) = a quinol + NAD(+) + 4 H(+)(out). In terms of biological role, NDH-1 shuttles electrons from NADH, via FMN and iron-sulfur (Fe-S) centers, to quinones in the respiratory chain. The immediate electron acceptor for the enzyme in this species is believed to be ubiquinone. Couples the redox reaction to proton translocation (for every two electrons transferred, four hydrogen ions are translocated across the cytoplasmic membrane), and thus conserves the redox energy in a proton gradient. The protein is NADH-quinone oxidoreductase subunit K of Sulfurihydrogenibium sp. (strain YO3AOP1).